Here is a 484-residue protein sequence, read N- to C-terminus: Tyramine receptor 1 (484 aa).

Residues 1 to 54 (MVRVELQAASLMNGSSAAEEPQDALVGGDACGGRRPPSVLGVRLAVPEWEVAVT) lie on the Extracellular side of the membrane. The N-linked (GlcNAc...) asparagine glycan is linked to asparagine 13. The chain crosses the membrane as a helical span at residues 55 to 77 (AVSLSLIILITIVGNVLVVLSVF). At 78 to 87 (TYKPLRIVQN) the chain is on the cytoplasmic side. Residues 88–109 (FFIVSLAVADLTVAVLVMPFNV) traverse the membrane as a helical segment. At 110-126 (AYSLIQRWVFGIVVCKM) the chain is on the extracellular side. A disulfide bond links cysteine 124 and cysteine 203. Residues 127–147 (WLTCDVLCCTASILNLCAIAL) traverse the membrane as a helical segment. Residues 148-167 (DRYWAITDPINYAQKRTLRR) are Cytoplasmic-facing. A helical membrane pass occupies residues 168–190 (VLAMIAGVWLLSGVISSPPLIGW). At 191-215 (NDWPMEFNDTTPCQLTEEQGYVIYS) the chain is on the extracellular side. Asparagine 198 carries an N-linked (GlcNAc...) asparagine glycan. Residues 216–237 (SLGSFFIPLFIMTIVYVEIFIA) traverse the membrane as a helical segment. At 238-411 (TKRRLRERAK…LSKERRAART (174 aa)) the chain is on the cytoplasmic side. Residues 253–280 (SAMKQQMAAQAVPSSVPSHDQESVSSET) are compositionally biased toward polar residues. Disordered stretches follow at residues 253-322 (SAMK…PAMV) and 358-383 (TTTA…PTPV). A compositionally biased stretch (basic residues) spans 295–306 (EKRRKTKKKSKK). A compositionally biased stretch (polar residues) spans 361–378 (AVTDSPRSRTASQKGSTA). A helical transmembrane segment spans residues 412–433 (LGIIMGVFVVCWLPFFLMYVIV). The Extracellular portion of the chain corresponds to 434–448 (PFCNPSCKPSPKLVN). The helical transmembrane segment at 449–470 (FITWLGYINSALNPIIYTIFNL) threads the bilayer. Residues 471 to 484 (DFRRAFKKLLHFKT) lie on the Cytoplasmic side of the membrane.

The protein belongs to the G-protein coupled receptor 1 family. As to expression, present mainly in the central nervous system, especially in the supra- and subesophageal, thoracic and abdominal ganglia. Not found in the distal part of optic lobes.

The protein resides in the cell membrane. Functionally, G-protein coupled receptor for tyramine, a known neurotransmitter and neuromodulator and direct precursor of octopamine. The rank order of potency for agonists of this receptor is tyramine &gt; naphazoline &gt; tolazoline &gt; DL-octopamine &gt; dopamine &gt; epinephrine &gt; 5-hydroxytryptamine. For antagonists, the rank order is yohimbine &gt; chlorpromazine &gt; mianserin &gt; phentolamine &gt; metoclopramide. The protein is Tyramine receptor 1 (GCR1) of Locusta migratoria (Migratory locust).